Consider the following 60-residue polypeptide: Cytotoxin sagitoxin (60 aa).

Cystine bridges form between cysteine 3–cysteine 21, cysteine 14–cysteine 38, cysteine 42–cysteine 53, and cysteine 54–cysteine 59.

Belongs to the three-finger toxin family. Short-chain subfamily. Type IA cytotoxin sub-subfamily. As to quaternary structure, monomer in solution; Homodimer and oligomer (homohexamer) in the presence of negatively charged lipids forming a pore with a size ranging between 20 and 30 Angstroms. As to expression, expressed by the venom gland.

It is found in the secreted. The protein localises to the target cell membrane. Functionally, shows cytolytic activity on many different cells by forming pore in lipid membranes. In vivo, increases heart rate or kill the animal by cardiac arrest. In addition, it binds to heparin with high affinity, interacts with Kv channel-interacting protein 1 (KCNIP1) in a calcium-independent manner, and binds to integrin alpha-V/beta-3 (ITGAV/ITGB3) with moderate affinity. This chain is Cytotoxin sagitoxin, found in Naja sagittifera (Andaman cobra).